We begin with the raw amino-acid sequence, 72 residues long: Cell division protein ZapB (72 aa).

Residues 3–71 (LSIIDQLEEK…LRSLLGQIDN (69 aa)) adopt a coiled-coil conformation.

This sequence belongs to the ZapB family. As to quaternary structure, homodimer. The ends of the coiled-coil dimer bind to each other, forming polymers. Interacts with FtsZ.

The protein localises to the cytoplasm. Non-essential, abundant cell division factor that is required for proper Z-ring formation. It is recruited early to the divisome by direct interaction with FtsZ, stimulating Z-ring assembly and thereby promoting cell division earlier in the cell cycle. Its recruitment to the Z-ring requires functional FtsA or ZipA. This Haemophilus ducreyi (strain 35000HP / ATCC 700724) protein is Cell division protein ZapB.